The following is a 199-amino-acid chain: Imidazoleglycerol-phosphate dehydratase (199 aa).

The protein belongs to the imidazoleglycerol-phosphate dehydratase family.

The protein localises to the cytoplasm. The catalysed reaction is D-erythro-1-(imidazol-4-yl)glycerol 3-phosphate = 3-(imidazol-4-yl)-2-oxopropyl phosphate + H2O. It participates in amino-acid biosynthesis; L-histidine biosynthesis; L-histidine from 5-phospho-alpha-D-ribose 1-diphosphate: step 6/9. This Kineococcus radiotolerans (strain ATCC BAA-149 / DSM 14245 / SRS30216) protein is Imidazoleglycerol-phosphate dehydratase.